Consider the following 810-residue polypeptide: Plasminogen (810 aa).

The N-terminal stretch at 1–19 is a signal peptide; it reads MEHKEVVLLLLLFLKSGQG. The PAN domain maps to 20–98; that stretch reads EPLDDYVNTQ…RDVVLFEKKV (79 aa). Disulfide bonds link cysteine 49-cysteine 73, cysteine 53-cysteine 61, cysteine 103-cysteine 181, cysteine 124-cysteine 164, cysteine 152-cysteine 176, cysteine 185-cysteine 262, cysteine 188-cysteine 316, cysteine 206-cysteine 245, cysteine 234-cysteine 257, cysteine 275-cysteine 352, cysteine 296-cysteine 335, and cysteine 324-cysteine 347. Kringle domains are found at residues 103–181, 184–262, and 275–352; these read CKTG…IPEC, ACMH…IPRC, and CLKG…IPSC. A disordered region spans residues 126-145; the sequence is KWSSTSPHRPRFSPATHPSE. Positions 136, 158, and 172 each coordinate L-lysine. O-linked (GalNAc...) threonine glycosylation occurs at threonine 365. Intrachain disulfides connect cysteine 377/cysteine 454, cysteine 398/cysteine 437, cysteine 426/cysteine 449, cysteine 481/cysteine 560, cysteine 502/cysteine 543, cysteine 531/cysteine 555, cysteine 567/cysteine 685, cysteine 577/cysteine 585, and cysteine 607/cysteine 623. Kringle domains follow at residues 377-454 and 481-560; these read CYHG…LKKC and CMFG…VPQC. The L-lysine site is built by aspartate 432 and arginine 445. One can recognise a Peptidase S1 domain in the interval 581 to 808; that stretch reads VVGGCVANAH…FVTWIEGVMR (228 aa). Serine 597 bears the Phosphoserine mark. Residues histidine 622 and aspartate 665 each act as charge relay system in the active site. A Phosphoserine modification is found at serine 688. 3 disulfide bridges follow: cysteine 699–cysteine 766, cysteine 729–cysteine 745, and cysteine 756–cysteine 784. The active-site Charge relay system is serine 760.

This sequence belongs to the peptidase S1 family. Plasminogen subfamily. In terms of assembly, interacts with CSPG4 and AMOT. Interacts (via the Kringle domains) with HRG; the interaction tethers PLG to the cell surface and enhances its activation. Interacts (via Kringle 4 domain) with ADA; the interaction stimulates PLG activation when in complex with DPP4. Angiostatin: Interacts with ATP5F1A; the interaction inhibits most of the angiogenic effects of angiostatin. Post-translationally, in the presence of the inhibitor, the activation involves only cleavage after Arg-580, yielding two chains held together by two disulfide bonds. In the absence of the inhibitor, the activation involves additionally the removal of the activation peptide.

It is found in the secreted. It catalyses the reaction Preferential cleavage: Lys-|-Xaa &gt; Arg-|-Xaa, higher selectivity than trypsin. Converts fibrin into soluble products.. Its activity is regulated as follows. Converted into plasmin by plasminogen activators, both plasminogen and its activator being bound to fibrin. Activated with catalytic amounts of streptokinase. Plasmin dissolves the fibrin of blood clots and acts as a proteolytic factor in a variety of other processes including embryonic development, tissue remodeling, tumor invasion, and inflammation. In ovulation, weakens the walls of the Graafian follicle. It activates the urokinase-type plasminogen activator, collagenases and several complement zymogens, such as C1, C4 and C5. Cleavage of fibronectin and laminin leads to cell detachment and apoptosis. Also cleaves fibrin, thrombospondin and von Willebrand factor. Its role in tissue remodeling and tumor invasion may be modulated by CSPG4. Binds to cells. The chain is Plasminogen (PLG) from Pongo abelii (Sumatran orangutan).